A 232-amino-acid polypeptide reads, in one-letter code: Large ribosomal subunit protein uL10c (232 aa).

Residues 1 to 52 (MESTLFLSKPLPTTIKTTTHSLSSVYPNPFKPNNLTFPRTTHKHPTTTTITA) constitute a chloroplast transit peptide.

It belongs to the universal ribosomal protein uL10 family. As to quaternary structure, component of the chloroplast large ribosomal subunit (LSU). Mature 70S chloroplast ribosomes of higher plants consist of a small (30S) and a large (50S) subunit. The 30S small subunit contains 1 molecule of ribosomal RNA (16S rRNA) and 24 different proteins. The 50S large subunit contains 3 rRNA molecules (23S, 5S and 4.5S rRNA) and 33 different proteins.

It localises to the plastid. The protein localises to the chloroplast. In terms of biological role, component of the chloroplast ribosome (chloro-ribosome), a dedicated translation machinery responsible for the synthesis of chloroplast genome-encoded proteins, including proteins of the transcription and translation machinery and components of the photosynthetic apparatus. This is Large ribosomal subunit protein uL10c (RPL10) from Spinacia oleracea (Spinach).